The primary structure comprises 328 residues: Phenylalanine--tRNA ligase alpha subunit (328 aa).

Glu-253 provides a ligand contact to Mg(2+).

Belongs to the class-II aminoacyl-tRNA synthetase family. Phe-tRNA synthetase alpha subunit type 1 subfamily. In terms of assembly, tetramer of two alpha and two beta subunits. It depends on Mg(2+) as a cofactor.

The protein localises to the cytoplasm. It carries out the reaction tRNA(Phe) + L-phenylalanine + ATP = L-phenylalanyl-tRNA(Phe) + AMP + diphosphate + H(+). The chain is Phenylalanine--tRNA ligase alpha subunit from Coxiella burnetii (strain CbuG_Q212) (Coxiella burnetii (strain Q212)).